The following is a 222-amino-acid chain: 25 kDa elongation factor 1-beta (222 aa).

A compositionally biased stretch (low complexity) spans 75–94; that stretch reads TSASAPAKQAPKKAASAPAK. The disordered stretch occupies residues 75-98; that stretch reads TSASAPAKQAPKKAASAPAKQADE.

This sequence belongs to the EF-1-beta/EF-1-delta family. As to quaternary structure, EF-1 is composed of 4 subunits: alpha, beta, delta, and gamma.

Functionally, EF-1-beta and EF-1-delta stimulate the exchange of GDP bound to EF-1-alpha to GTP. The sequence is that of 25 kDa elongation factor 1-beta from Trypanosoma cruzi.